Reading from the N-terminus, the 970-residue chain is Bifunctional glutamine synthetase adenylyltransferase/adenylyl-removing enzyme (970 aa).

The adenylyl removase stretch occupies residues 1–454 (MNSLPPRPSL…HFQQVFAAPQ (454 aa)). Residues 468–970 (QAVLASIWAG…WRRVMEEGKA (503 aa)) are adenylyl transferase.

It belongs to the GlnE family. Requires Mg(2+) as cofactor.

It carries out the reaction [glutamine synthetase]-O(4)-(5'-adenylyl)-L-tyrosine + phosphate = [glutamine synthetase]-L-tyrosine + ADP. It catalyses the reaction [glutamine synthetase]-L-tyrosine + ATP = [glutamine synthetase]-O(4)-(5'-adenylyl)-L-tyrosine + diphosphate. Its function is as follows. Involved in the regulation of glutamine synthetase GlnA, a key enzyme in the process to assimilate ammonia. When cellular nitrogen levels are high, the C-terminal adenylyl transferase (AT) inactivates GlnA by covalent transfer of an adenylyl group from ATP to specific tyrosine residue of GlnA, thus reducing its activity. Conversely, when nitrogen levels are low, the N-terminal adenylyl removase (AR) activates GlnA by removing the adenylyl group by phosphorolysis, increasing its activity. The regulatory region of GlnE binds the signal transduction protein PII (GlnB) which indicates the nitrogen status of the cell. The sequence is that of Bifunctional glutamine synthetase adenylyltransferase/adenylyl-removing enzyme from Thioalkalivibrio sulfidiphilus (strain HL-EbGR7).